Reading from the N-terminus, the 261-residue chain is X-box-binding protein 1 (261 aa).

Over 1–185 the chain is Cytoplasmic; that stretch reads MVVVAPAQSP…VQAQLSPLQN (185 aa). Residues 27–37 show a composition bias toward low complexity; that stretch reads TGGAPAGRALP. Positions 27-65 are disordered; that stretch reads TGGAPAGRALPVMVPGQQGASPEGASGVPPQARKRQRLT. Residues serine 47 and serine 68 each carry the phosphoserine modification. Positions 70–133 constitute a bZIP domain; that stretch reads EEKALRRKLK…HGLVVENQEL (64 aa). The segment at 72–94 is basic motif; the sequence is KALRRKLKNRVAAQTARDRKKAR. A nuclear localization signal (NLS) region spans residues 76–92; that stretch reads RKLKNRVAAQTARDRKK. The segment at 98–133 is leucine-zipper; the sequence is LEQQVVDLEEENQKLLLENQLLREKTHGLVVENQEL. A helical; Signal-anchor for type II membrane protein membrane pass occupies residues 186-203; it reads ISPWTLMALTLQTLSLTS. Residues 204-261 are Lumenal-facing; the sequence is CWAFCSTWTQSCSSDVLPQSLPAWSSSQKWTQKDPVPYRPPLLHPWGRHQPSWKPLMN.

Belongs to the bZIP family. As to quaternary structure, isoform 1 interacts with HM13. Isoform 1 interacts with RNF139; the interaction induces ubiquitination and degradation of isoform 1. Isoform 1 interacts (via luminal domain) with DERL1; the interaction obviates the need for ectodomain shedding prior HM13/SPP-mediated XBP1 isoform 1 cleavage. Isoform 1 interacts with HDAC3 and AKT1; the interactions occur in endothelial cell (EC) under disturbed flow. Isoform 1 interacts with the oncoprotein FOS. Interacts with SIRT1. In terms of processing, isoform 1 is ubiquitinated, leading to proteasome-mediated degradation in response to ER stress. X-box-binding protein 1, cytoplasmic form and luminal form are produced by intramembrane proteolytic cleavage of ER membrane-anchored isoform 1 triggered by HM13/SPP in a DERL1-RNF139-dependent and VCP/p97-independent manner. X-box-binding protein 1, luminal form is ubiquitinated leading to proteasomal degradation. Post-translationally, acetylated by EP300; acetylation positively regulates the transcriptional activity of XBP1. Deacetylated by SIRT1; deacetylation negatively regulates the transcriptional activity of XBP1.

Its subcellular location is the nucleus. The protein localises to the endoplasmic reticulum. It is found in the cytoplasm. The protein resides in the endoplasmic reticulum membrane. It localises to the membrane. Functionally, functions as a transcription factor during endoplasmic reticulum (ER) stress by regulating the unfolded protein response (UPR). Required for cardiac myogenesis and hepatogenesis during embryonic development, and the development of secretory tissues such as exocrine pancreas and salivary gland. Involved in terminal differentiation of B lymphocytes to plasma cells and production of immunoglobulins. Modulates the cellular response to ER stress in a PIK3R-dependent manner. Binds to the cis-acting X box present in the promoter regions of major histocompatibility complex class II genes. Involved in VEGF-induced endothelial cell (EC) proliferation and retinal blood vessel formation during embryonic development but also for angiogenesis in adult tissues under ischemic conditions. Functions also as a major regulator of the UPR in obesity-induced insulin resistance and type 2 diabetes for the management of obesity and diabetes prevention. Its function is as follows. Acts as a weak transcriptional factor. Together with HDAC3, contributes to the activation of NFE2L2-mediated HMOX1 transcription factor gene expression in a PI(3)K/mTORC2/Akt-dependent signaling pathway leading to EC survival under disturbed flow/oxidative stress. Binds to the ER stress response element (ERSE) upon ER stress. Binds to the consensus 5'-GATGACGTG[TG]N(3)[AT]T-3' sequence related to cAMP responsive element (CRE)-like sequences. Associates preferentially to the HDAC3 gene promoter region in a static flow-dependent manner. Binds to the CDH5/VE-cadherin gene promoter region. The protein is X-box-binding protein 1 of Bos taurus (Bovine).